The sequence spans 126 residues: MHLSQLLACALLLSLLSLRPSEAKPGAPPKVPRTPPGEEVAEPQAAGGGQKKGDKTPGGGGANLKDDRSRLLRDLRVDTKSRAAWTRLLHEHPNARKYKGGNKKGLSKGCFGLKLDRIGSMSGLGC.

An N-terminal signal peptide occupies residues methionine 1–alanine 23. The tract at residues proline 20 to leucine 71 is disordered. The propeptide occupies lysine 24–arginine 73. Residues glycine 26 to proline 35 show a composition bias toward pro residues. Positions alanine 46–alanine 62 are enriched in gly residues. Cysteines 110 and 126 form a disulfide.

It belongs to the natriuretic peptide family. Post-translationally, degraded by IDE (in vitro).

Its subcellular location is the secreted. Its function is as follows. Hormone which plays a role in endochondral ossification through regulation of cartilaginous growth plate chondrocytes proliferation and differentiation. May also be vasoactive and natriuretic. Acts by specifically binding and stimulating NPR2 to produce cGMP. Binds the clearance receptor NPR3. The protein is C-type natriuretic peptide (NPPC) of Ovis aries (Sheep).